Reading from the N-terminus, the 44-residue chain is Thymosin beta-4 (44 aa).

A compositionally biased stretch (basic and acidic residues) spans 1-25; the sequence is MSDKPDMAEIEKFDKSKLKKTETQE. Residues 1 to 44 are disordered; the sequence is MSDKPDMAEIEKFDKSKLKKTETQEKNPLPSKETIEQEKQAGES. Residue Ser-2 is modified to N-acetylserine. A Phosphoserine modification is found at Ser-2. Residue Lys-4 is modified to N6-acetyllysine. Lys-12 carries the N6-acetyllysine; alternate modification. Lys-12 is covalently cross-linked (Glycyl lysine isopeptide (Lys-Gly) (interchain with G-Cter in SUMO2); alternate). At Thr-23 the chain carries Phosphothreonine. Lys-26 bears the N6-acetyllysine mark. Ser-31 is subject to Phosphoserine. Residue Lys-32 is modified to N6-acetyllysine. The segment covering 33-44 has biased composition (basic and acidic residues); it reads ETIEQEKQAGES. Thr-34 bears the Phosphothreonine mark. Lys-39 is modified (N6-acetyllysine).

Belongs to the thymosin beta family. As to quaternary structure, identified in a complex composed of ACTA1, COBL, GSN AND TMSB4X. Interacts with SERPINB1. Post-translationally, acSDKP is inactivated by ACE, which removes the dipeptide Lys-Pro from its C-terminus.

It localises to the cytoplasm. The protein resides in the cytoskeleton. Plays an important role in the organization of the cytoskeleton. Binds to and sequesters actin monomers (G actin) and therefore inhibits actin polymerization. In terms of biological role, potent inhibitor of bone marrow derived stem cell differentiation. Acts by inhibits the entry of hematopoietic pluripotent stem cells into the S-phase. This chain is Thymosin beta-4 (TMSB4), found in Bos taurus (Bovine).